An 858-amino-acid chain; its full sequence is Piwi-like protein 1 (858 aa).

A compositionally biased stretch (basic residues) spans methionine 1 to glycine 13. Positions methionine 1–alanine 56 are disordered. A compositionally biased stretch (low complexity) spans glutamine 16–proline 26. Residues threonine 276–glycine 388 enclose the PAZ domain. Residues threonine 314–arginine 316 are required for binding 2'-O-methylated 3'-end of piRNAs. Positions serine 476–glutamate 612 are MID region. In terms of domain architecture, Piwi spans methionine 552–histidine 844. Active-site residues include aspartate 629, glutamate 667, aspartate 699, and histidine 833.

It belongs to the argonaute family. Piwi subfamily. Mg(2+) is required as a cofactor. Post-translationally, methylated on arginine residues; required for the interaction with Tudor domain-containing protein and subsequent localization to the meiotic nuage, also named P granule. In terms of tissue distribution, expressed exclusively in the adult gonads; expression in the ovary weaker than in the testis (at protein level). During neurogenesis and organogenesis, expression is detected in CNS (midbrain and eye) and fin buds. Starting from 24 hours post-fertilization, expression is found in the genital ridge.

It is found in the cytoplasm. Plays a central role during gametogenesis by repressing transposable elements and preventing their mobilization, which is essential for the germline integrity. Acts via the piRNA metabolic process, which mediates the repression of transposable elements during meiosis by forming complexes composed of piRNAs and Piwi proteins and governs the methylation and subsequent repression of transposons. Directly binds methylated piRNAs, a class of 24 to 30 nucleotide RNAs that are generated by a Dicer-independent mechanism and are primarily derived from transposons and other repeated sequence elements. Has a strong preference for piRNAs with a uridine nucleotide at their 5'-end (g1U preference, also named 1U-bias) and binds piRNAs in an opposite direction compared to piwil2/zili. Participates in a piRNA amplification loop with piwil2/zili. Not involved in the piRNA amplification loop, also named ping-pong amplification cycle. Acts as an endoribonuclease that cleaves transposon messenger RNAs. This chain is Piwi-like protein 1 (piwil1), found in Danio rerio (Zebrafish).